The primary structure comprises 97 residues: Small ribosomal subunit protein bS6 (97 aa).

This sequence belongs to the bacterial ribosomal protein bS6 family.

Functionally, binds together with bS18 to 16S ribosomal RNA. This Listeria innocua serovar 6a (strain ATCC BAA-680 / CLIP 11262) protein is Small ribosomal subunit protein bS6.